Consider the following 251-residue polypeptide: Triosephosphate isomerase 1 (251 aa).

Asn-9–Lys-11 contributes to the substrate binding site. The active-site Electrophile is His-95. The active-site Proton acceptor is Glu-167. Substrate-binding positions include Gly-173, Ser-213, and Gly-234 to Gly-235.

The protein belongs to the triosephosphate isomerase family. In terms of assembly, homodimer.

The protein localises to the cytoplasm. It catalyses the reaction D-glyceraldehyde 3-phosphate = dihydroxyacetone phosphate. The protein operates within carbohydrate biosynthesis; gluconeogenesis. It participates in carbohydrate degradation; glycolysis; D-glyceraldehyde 3-phosphate from glycerone phosphate: step 1/1. Its function is as follows. Involved in the gluconeogenesis. Catalyzes stereospecifically the conversion of dihydroxyacetone phosphate (DHAP) to D-glyceraldehyde-3-phosphate (G3P). This is Triosephosphate isomerase 1 from Listeria monocytogenes serovar 1/2a (strain ATCC BAA-679 / EGD-e).